The chain runs to 461 residues: Methylenetetrahydrofolate--tRNA-(uracil-5-)-methyltransferase TrmFO (461 aa).

Position 16–21 (16–21 (GAGLAG)) interacts with FAD.

The protein belongs to the MnmG family. TrmFO subfamily. Requires FAD as cofactor.

The protein localises to the cytoplasm. It carries out the reaction uridine(54) in tRNA + (6R)-5,10-methylene-5,6,7,8-tetrahydrofolate + NADH + H(+) = 5-methyluridine(54) in tRNA + (6S)-5,6,7,8-tetrahydrofolate + NAD(+). The enzyme catalyses uridine(54) in tRNA + (6R)-5,10-methylene-5,6,7,8-tetrahydrofolate + NADPH + H(+) = 5-methyluridine(54) in tRNA + (6S)-5,6,7,8-tetrahydrofolate + NADP(+). Its function is as follows. Catalyzes the folate-dependent formation of 5-methyl-uridine at position 54 (M-5-U54) in all tRNAs. In Parasynechococcus marenigrum (strain WH8102), this protein is Methylenetetrahydrofolate--tRNA-(uracil-5-)-methyltransferase TrmFO.